A 159-amino-acid polypeptide reads, in one-letter code: 17 kDa surface antigen (159 aa).

Positions 1–19 (MKLLSKIMIIALAASMLQA) are cleaved as a signal peptide. Cys-20 carries the N-palmitoyl cysteine lipid modification. Cys-20 carries the S-diacylglycerol cysteine lipid modification.

The protein belongs to the rickettsiale 17 kDa surface antigen family.

The protein localises to the cell outer membrane. This Rickettsia felis (strain ATCC VR-1525 / URRWXCal2) (Rickettsia azadi) protein is 17 kDa surface antigen (omp).